Here is a 2798-residue protein sequence, read N- to C-terminus: Nipped-B-like protein (2798 aa).

Composition is skewed to polar residues over residues 128–173 (LSQN…QNSP) and 191–208 (HPSS…SVSS). The tract at residues 128–338 (LSQNSMHSSP…IKLGKDEKDQ (211 aa)) is disordered. 2 positions are modified to phosphoserine: serine 150 and serine 162. Positions 234–249 (HHADNPRHGSSDDYLH) are enriched in basic and acidic residues. Serine 243, serine 256, serine 274, serine 280, serine 284, serine 301, serine 306, serine 318, and serine 350 each carry phosphoserine. The segment covering 482-500 (RESAIERERFSKEVQDKDK) has biased composition (basic and acidic residues). A disordered region spans residues 482-940 (RESAIERERF…NKAEFPSYLL (459 aa)). Residues 523 to 534 (PASQETGSTGNG) show a composition bias toward polar residues. 5 stretches are compositionally biased toward basic and acidic residues: residues 562-572 (DSIKKPEETKQ), 593-625 (PENH…ESKP), 634-663 (KSNE…ESKQ), 672-685 (KQNE…KPND), and 694-899 (ENTK…DTNK). Phosphothreonine occurs at positions 713 and 746. Serine 906 carries the phosphoserine modification. Positions 908–933 (NSKDDKRTEGNRSKVDSNKAHTDNKA) are enriched in basic and acidic residues. The short motif at 990–1003 (NKGAKPVVVLQKLS) is the PxVxL motif element. Disordered regions lie at residues 1011–1041 (IKDR…DQSV) and 1054–1186 (ESTM…TPEE). At lysine 1076 the chain carries N6-acetyllysine. Phosphoserine occurs at positions 1083, 1084, and 1090. The segment covering 1083–1094 (SSDEDNDSDEAF) has biased composition (acidic residues). Residues 1103–1133 (KDDDKAWEYEERDRRSSGDHRRSGHSHDGRR) are compositionally biased toward basic and acidic residues. Serine 1144, serine 1146, and serine 1148 each carry phosphoserine. Tyrosine 1153 bears the Phosphotyrosine mark. A Phosphoserine modification is found at serine 1154. Positions 1165–1176 (KMKKKEKQKKRK) are enriched in basic residues. Threonine 1183 is subject to Phosphothreonine. Residue serine 1191 is modified to Phosphoserine. Basic and acidic residues predominate over residues 1685-1705 (AMKSQKDEESSDATHHAKELE). Residues 1685–1706 (AMKSQKDEESSDATHHAKELET) are disordered. HEAT repeat units follow at residues 1761 to 1799 (AQSF…VDPS), 1837 to 1875 (PQLA…EQPT), 1939 to 1978 (YDWF…HILK), 2221 to 2261 (VNLK…LKEM), and 2307 to 2345 (LIHP…KYAG). Residues 2467-2483 (VKDKRKERKTSPAKENE) show a composition bias toward basic and acidic residues. Disordered regions lie at residues 2467–2514 (VKDK…DDIN) and 2645–2690 (TSLL…DSTE). Serine 2487, serine 2503, serine 2505, serine 2507, serine 2509, serine 2646, and serine 2652 each carry phosphoserine. Residues 2504 to 2513 (ESDSDSEDDI) show a composition bias toward acidic residues. Threonine 2661 bears the Phosphothreonine mark. The residue at position 2666 (serine 2666) is a Phosphoserine.

It belongs to the SCC2/Nipped-B family. In terms of assembly, heterodimerizes with MAU2/SCC4 to form the cohesin loading complex. The NIPBL-MAU2 heterodimer interacts with the cohesin complex composed of SMC1A/B and SMC3 heterodimer, RAD21 and STAG1/SA1. NIPBL directly contacts all members of the complex, RAD21, SMC1A/B, SMC3 and STAG1. Interacts directly (via PxVxL motif) with CBX3 and CBX5. Interacts with ZNF609 (via N-terminus). Interacts with the multiprotein complex Integrator. Interacts with BRD4. In terms of tissue distribution, spermatocytes and oocytes (at protein level).

Its subcellular location is the nucleus. The protein resides in the chromosome. In terms of biological role, plays an important role in the loading of the cohesin complex on to DNA. Forms a heterodimeric complex (also known as cohesin loading complex) with MAU2/SCC4 which mediates the loading of the cohesin complex onto chromatin. Plays a role in cohesin loading at sites of DNA damage. Its recruitment to double-strand breaks (DSBs) sites occurs in a CBX3-, RNF8- and RNF168-dependent manner whereas its recruitment to UV irradiation-induced DNA damage sites occurs in a ATM-, ATR-, RNF8- and RNF168-dependent manner. Along with ZNF609, promotes cortical neuron migration during brain development by regulating the transcription of crucial genes in this process. Preferentially binds promoters containing paused RNA polymerase II. Up-regulates the expression of SEMA3A, NRP1, PLXND1 and GABBR2 genes, among others. The sequence is that of Nipped-B-like protein (Nipbl) from Mus musculus (Mouse).